The sequence spans 226 residues: Myosin regulatory light chain 10 (226 aa).

EF-hand domains lie at 84–119, 154–189, and 190–225; these read NSPA…LGRI, DPEE…QADR, and FSEE…GEEK. Residues D97, N99, D101, and D108 each contribute to the Ca(2+) site.

In terms of assembly, myosin is a hexamer of 2 heavy chains and 4 light chains.

This Homo sapiens (Human) protein is Myosin regulatory light chain 10 (MYL10).